The primary structure comprises 185 residues: Elongation factor P (185 aa).

This sequence belongs to the elongation factor P family.

Its subcellular location is the cytoplasm. It functions in the pathway protein biosynthesis; polypeptide chain elongation. In terms of biological role, involved in peptide bond synthesis. Stimulates efficient translation and peptide-bond synthesis on native or reconstituted 70S ribosomes in vitro. Probably functions indirectly by altering the affinity of the ribosome for aminoacyl-tRNA, thus increasing their reactivity as acceptors for peptidyl transferase. The sequence is that of Elongation factor P from Pelotomaculum thermopropionicum (strain DSM 13744 / JCM 10971 / SI).